The sequence spans 438 residues: Ribosomal protein uS12 methylthiotransferase RimO (438 aa).

Positions 5-116 (PTIAISHLGC…IVQVIQRVEN (112 aa)) constitute an MTTase N-terminal domain. 6 residues coordinate [4Fe-4S] cluster: Cys-14, Cys-50, Cys-79, Cys-154, Cys-158, and Cys-161. A Radical SAM core domain is found at 140-369 (TTSEGVAYLR…MQIQQPISLQ (230 aa)). Positions 372–438 (CACIGDIVDV…IYDLYGEVIN (67 aa)) constitute a TRAM domain.

The protein belongs to the methylthiotransferase family. RimO subfamily. Requires [4Fe-4S] cluster as cofactor.

It localises to the cytoplasm. It catalyses the reaction L-aspartate(89)-[ribosomal protein uS12]-hydrogen + (sulfur carrier)-SH + AH2 + 2 S-adenosyl-L-methionine = 3-methylsulfanyl-L-aspartate(89)-[ribosomal protein uS12]-hydrogen + (sulfur carrier)-H + 5'-deoxyadenosine + L-methionine + A + S-adenosyl-L-homocysteine + 2 H(+). Functionally, catalyzes the methylthiolation of an aspartic acid residue of ribosomal protein uS12. The chain is Ribosomal protein uS12 methylthiotransferase RimO from Gloeothece citriformis (strain PCC 7424) (Cyanothece sp. (strain PCC 7424)).